Here is a 188-residue protein sequence, read N- to C-terminus: Elongation factor P (188 aa).

The protein belongs to the elongation factor P family.

The protein resides in the cytoplasm. The protein operates within protein biosynthesis; polypeptide chain elongation. Its function is as follows. Involved in peptide bond synthesis. Stimulates efficient translation and peptide-bond synthesis on native or reconstituted 70S ribosomes in vitro. Probably functions indirectly by altering the affinity of the ribosome for aminoacyl-tRNA, thus increasing their reactivity as acceptors for peptidyl transferase. This Rickettsia typhi (strain ATCC VR-144 / Wilmington) protein is Elongation factor P.